Consider the following 286-residue polypeptide: 4-hydroxybenzoate octaprenyltransferase (286 aa).

The next 7 membrane-spanning stretches (helical) occupy residues Gly21–Met40, Leu96–Val116, Phe142–Val162, Trp167–Val187, Gln210–Ala230, Leu235–Phe255, and Phe266–Phe286.

It belongs to the UbiA prenyltransferase family. Mg(2+) is required as a cofactor.

Its subcellular location is the cell inner membrane. It catalyses the reaction all-trans-octaprenyl diphosphate + 4-hydroxybenzoate = 4-hydroxy-3-(all-trans-octaprenyl)benzoate + diphosphate. It participates in cofactor biosynthesis; ubiquinone biosynthesis. Functionally, catalyzes the prenylation of para-hydroxybenzoate (PHB) with an all-trans polyprenyl group. Mediates the second step in the final reaction sequence of ubiquinone-8 (UQ-8) biosynthesis, which is the condensation of the polyisoprenoid side chain with PHB, generating the first membrane-bound Q intermediate 3-octaprenyl-4-hydroxybenzoate. This Shewanella sp. (strain MR-4) protein is 4-hydroxybenzoate octaprenyltransferase.